The primary structure comprises 146 residues: Vascular endothelial growth factor isoform GtVF (146 aa).

The N-terminal stretch at 1 to 24 (MAAYLLAVAILFCIQGWPSGTVQG) is a signal peptide. At glutamine 25 the chain carries Pyrrolidone carboxylic acid. Disulfide bonds link cysteine 38-cysteine 80, cysteine 69-cysteine 115, and cysteine 73-cysteine 117. The interval 116 to 146 (ECRPRSRSGVDSGKRKRNPEEGEPRAKFPFV) is disordered. The segment covering 133–146 (NPEEGEPRAKFPFV) has biased composition (basic and acidic residues).

The protein belongs to the PDGF/VEGF growth factor family. Snake venom VEGF subfamily. Homodimer; disulfide-linked. In terms of tissue distribution, expressed by the venom gland.

The protein resides in the secreted. Functionally, snake venom VEGFs that may contribute to venom dispersion and prey subjugation by inducing vascular permeability and hypotension. This protein induces an increase in capillary permeability after intradermal injection, in a VEGFR-2 (KDR) dependent manner. In addition, it provokes a drastic hypotensive effect after intravenous injection. The hypotension is mediated by nitric oxide (NO), which is produced by VEGF-activated endothelium NO synthase. Also induces angiogenesis in vitro. Unlike other crotalid VEGFs, this protein probably interacts with VEGF receptor-2 (KDR). The chain is Vascular endothelial growth factor isoform GtVF from Gloydius tsushimaensis (Tsushima Island pitviper).